The chain runs to 733 residues: MDKIWRELGLTDEEYEKIISILGREPNITEIGMYSVMWSEHCAYKNSKPLLKYLPTKGERVIQGPGENAGVLDIGDNLAVVMKIESHNHPSAIEPYQGAATGVGGIIRDIFTMGARPIALLDSLRFGIPDDKRTKYLIENVVAGIADYGNCIGIPTVGGDTYFEESYKGNPLVNAMCVGIVEKDKIKKGIAKGIGNPVMIVGATTGRDGIGGASFASQELSEESEEKRPSVQVGDPFMEKLLLEACLELFETDAVVAIQDMGAAGLTSSSCEMASRGGVGMELDLDKVPLREKGMTPYEIMLSESQERMLVVVEKGKEEDVQKVFKKWGLNAATIGKITDDGMIRVIKEGKIVAEVPAKSLAEDAPQYIREEEVPKWQEDVNKLNINEVKPPEDMNKALKDVISSLNIASKEWIYSQYDYMVRTDTAITPGMDAAVVRIKGTKKAIALTTDCNGRYCYLDPYIGSQIAVAEAARNLCMVGAKPIGVTDCLNFGNPEKKEIYWQLKNSIFGIAKACETLQIPVVSGNVSLYNENEEGAIYPTPVIGMAGLIEDVSKICTMDFKKERDVIIILGENKGEIGGSEYLKVCFGMVKGQPPQIDLEEEKRLQELVLKLIDKGLINSSHDISEGGFAAALVESAISGKKGAKISLQTSLREDIELFSESPPRALITVSPEKVEEVLKIAYEYQVPAQKVGVVEGKKIAIEVNGKKIIDLPLEVLEESWRGRIKWEMERN.

His41 is an active-site residue. The ATP site is built by Tyr44 and Lys83. Glu85 contributes to the Mg(2+) binding site. Substrate contacts are provided by residues 86-89 (SHNH) and Arg108. The active-site Proton acceptor is His87. Position 109 (Asp109) interacts with Mg(2+). The disordered stretch occupies residues 212–232 (GASFASQELSEESEEKRPSVQ). Gln232 is a substrate binding site. Asp260 is a binding site for Mg(2+). 304 to 306 (ESQ) is a binding site for substrate. Residues Asp488 and Gly525 each contribute to the ATP site. A Mg(2+)-binding site is contributed by Asn526. Ser528 lines the substrate pocket.

This sequence belongs to the FGAMS family. Monomer. Part of the FGAM synthase complex composed of 1 PurL, 1 PurQ and 2 PurS subunits.

It is found in the cytoplasm. It carries out the reaction N(2)-formyl-N(1)-(5-phospho-beta-D-ribosyl)glycinamide + L-glutamine + ATP + H2O = 2-formamido-N(1)-(5-O-phospho-beta-D-ribosyl)acetamidine + L-glutamate + ADP + phosphate + H(+). Its pathway is purine metabolism; IMP biosynthesis via de novo pathway; 5-amino-1-(5-phospho-D-ribosyl)imidazole from N(2)-formyl-N(1)-(5-phospho-D-ribosyl)glycinamide: step 1/2. In terms of biological role, part of the phosphoribosylformylglycinamidine synthase complex involved in the purines biosynthetic pathway. Catalyzes the ATP-dependent conversion of formylglycinamide ribonucleotide (FGAR) and glutamine to yield formylglycinamidine ribonucleotide (FGAM) and glutamate. The FGAM synthase complex is composed of three subunits. PurQ produces an ammonia molecule by converting glutamine to glutamate. PurL transfers the ammonia molecule to FGAR to form FGAM in an ATP-dependent manner. PurS interacts with PurQ and PurL and is thought to assist in the transfer of the ammonia molecule from PurQ to PurL. This chain is Phosphoribosylformylglycinamidine synthase subunit PurL, found in Thermoanaerobacter pseudethanolicus (strain ATCC 33223 / 39E) (Clostridium thermohydrosulfuricum).